Consider the following 464-residue polypeptide: MMARRDPTSWAKRLVRAQTLQKQRRAPVGPRAPPPDEEDPRLKCKNCGAFGHTARSTRCPMKCWKAALVPATLGKKEGKENLKPWKPRGEANPGPLNKDKGEKEERPRQQDPQRKALLHMFSGKPPEKPLPNGKGSTESSDYLRVASGPMPVHTTSKRPRLDPVLADRSATEMSGRGSVLASLSPLRKASLSSSSSLGPKERQTGAAADMPQPAVRHQGREPLLVVKPTHSRPEGGCREVPQAASKTHGLLQASRPQAQDKRPAVTPQPCPPAATHSLGLGSNLSFGPGAKRPAQAPIQACLNFPKKPRLGPFQIPESAIQGGELGAPENLQPPPAATELGPSTSPQMGRRTPAQVPSVDRQPPHSRPCLPTAQACTMSHHSAAGHDGAQPLRVLFRRLENGRWSSSLLAAPSFHSPEKPGAFLAQSPHVSEKSEAPCVRVPPSVLYEDLQVSSSSEDSDSDLE.

Disordered stretches follow at residues 1–42, 69–389, and 415–437; these read MMAR…DPRL, VPAT…HDGA, and HSPE…SEAP. Basic and acidic residues-rich tracts occupy residues 74–89 and 97–114; these read GKKE…KPRG and NKDK…DPQR. Positions 180–197 are enriched in low complexity; the sequence is LASLSPLRKASLSSSSSL.

This sequence belongs to the FAM90 family.

In Homo sapiens (Human), this protein is Protein FAM90A24.